Here is a 522-residue protein sequence, read N- to C-terminus: Coiled-coil domain-containing protein 149-B (522 aa).

2 coiled-coil regions span residues 1 to 196 (MANQ…LESK) and 260 to 287 (IRHQRQTNKILGNRVAELERKLKTLEVS). Residues 413–522 (ACTAERSEQH…TSPHQECPSS (110 aa)) are disordered. Composition is skewed to polar residues over residues 429–438 (GGHQSMSTEA), 467–490 (QPVTSETSGSFDCISGSESCTAEQ), and 503–522 (ASLNTSPPEQTSPHQECPSS).

It belongs to the CCDC149 family.

This Danio rerio (Zebrafish) protein is Coiled-coil domain-containing protein 149-B (ccdc149b).